Here is a 357-residue protein sequence, read N- to C-terminus: Heat-inducible transcription repressor HrcA (357 aa).

Belongs to the HrcA family.

In terms of biological role, negative regulator of class I heat shock genes (grpE-dnaK-dnaJ and groELS operons). Prevents heat-shock induction of these operons. This is Heat-inducible transcription repressor HrcA from Chlorobium phaeovibrioides (strain DSM 265 / 1930) (Prosthecochloris vibrioformis (strain DSM 265)).